A 273-amino-acid polypeptide reads, in one-letter code: tRNA (guanine-N(7)-)-methyltransferase (273 aa).

6 residues coordinate S-adenosyl-L-methionine: G86, E109, R111, N142, A143, and L162. D165 is an active-site residue. Positions 166 to 174 (PHFKKTKHK) are alphaC helix. T240 and E242 together coordinate S-adenosyl-L-methionine. The tract at residues 240 to 248 (TEEGKKVQR) is alpha6 helix.

Belongs to the class I-like SAM-binding methyltransferase superfamily. TrmB family. As to quaternary structure, catalytic component of the METTL1-WDR4 complex, composed of mettl1 and wdr4.

The protein localises to the nucleus. The catalysed reaction is guanosine(46) in tRNA + S-adenosyl-L-methionine = N(7)-methylguanosine(46) in tRNA + S-adenosyl-L-homocysteine. It carries out the reaction a guanosine in mRNA + S-adenosyl-L-methionine = an N(7)-methylguanosine in mRNA + S-adenosyl-L-homocysteine. It catalyses the reaction a guanosine in miRNA + S-adenosyl-L-methionine = an N(7)-methylguanosine in miRNA + S-adenosyl-L-homocysteine. The protein operates within tRNA modification; N(7)-methylguanine-tRNA biosynthesis. Its function is as follows. Catalytic component of METTL1-WDR4 methyltransferase complex that mediates the formation of N(7)-methylguanine in a subset of RNA species, such as tRNAs, mRNAs and microRNAs (miRNAs). Catalyzes the formation of N(7)-methylguanine at position 46 (m7G46) in a large subset of tRNAs that contain the 5'-RAGGU-3' motif within the variable loop. M7G46 interacts with C13-G22 in the D-loop to stabilize tRNA tertiary structure and protect tRNAs from decay. Also acts as a methyltransferase for a subset of internal N(7)-methylguanine in mRNAs. Internal N(7)-methylguanine methylation of mRNAs in response to stress promotes their relocalization to stress granules, thereby suppressing their translation. Also methylates a specific subset of miRNAs. In Xenopus laevis (African clawed frog), this protein is tRNA (guanine-N(7)-)-methyltransferase (mettl1).